The sequence spans 721 residues: Polyribonucleotide nucleotidyltransferase (721 aa).

Positions 511 and 517 each coordinate Mg(2+). The region spanning 577-637 (PSTDFFHINP…SGVQAAREHI (61 aa)) is the KH domain. The 68-residue stretch at 654–721 (GDIHKGIVKK…KGNKISLGIA (68 aa)) folds into the S1 motif domain.

It belongs to the polyribonucleotide nucleotidyltransferase family. The cofactor is Mg(2+).

The protein resides in the cytoplasm. It catalyses the reaction RNA(n+1) + phosphate = RNA(n) + a ribonucleoside 5'-diphosphate. Functionally, involved in mRNA degradation. Catalyzes the phosphorolysis of single-stranded polyribonucleotides processively in the 3'- to 5'-direction. In Sulfurimonas denitrificans (strain ATCC 33889 / DSM 1251) (Thiomicrospira denitrificans (strain ATCC 33889 / DSM 1251)), this protein is Polyribonucleotide nucleotidyltransferase.